The following is a 230-amino-acid chain: 3-isopropylmalate dehydratase small subunit (230 aa).

It belongs to the LeuD family. LeuD type 1 subfamily. Heterodimer of LeuC and LeuD.

The catalysed reaction is (2R,3S)-3-isopropylmalate = (2S)-2-isopropylmalate. It functions in the pathway amino-acid biosynthesis; L-leucine biosynthesis; L-leucine from 3-methyl-2-oxobutanoate: step 2/4. Its function is as follows. Catalyzes the isomerization between 2-isopropylmalate and 3-isopropylmalate, via the formation of 2-isopropylmaleate. The sequence is that of 3-isopropylmalate dehydratase small subunit from Bifidobacterium longum (strain DJO10A).